The following is a 304-amino-acid chain: MAVSVKRLINDFDLEVLVEGNEDVKIEVNDVNRPGLQLAGFYNYFAPERIQIIGKAEWSFLQDMQIEVRKKRVKKYLSFNITCLIISRGLDPHEEFIKEARKNNIWVLRSKSVTTKLISKITLYLADKLAPETRLHGVLVDVSGIGILITGESGIGKSETALELIKRGHRLITDDAVDIRESDGTLIGSSPKITIGMLEVRGIGIIDVTQLYGLSSVLEEKEIKLIMHFEHWKDDNDYDRLGIDNQYMDILGIPVKKLTVPVRPGRNIAVIIEAAAVNYRYSLMSKISPVDIIENRMSAVSDEA.

Residues H136 and K157 contribute to the active site. An ATP-binding site is contributed by 151–158 (GESGIGKS). Mg(2+) is bound at residue S158. The active-site Proton acceptor; for phosphorylation activity. Proton donor; for dephosphorylation activity is the D175. The important for the catalytic mechanism of both phosphorylation and dephosphorylation stretch occupies residues 198-207 (LEVRGIGIID). E199 lines the Mg(2+) pocket. Residue R240 is part of the active site. Residues 261–266 (PVRPGR) are important for the catalytic mechanism of dephosphorylation.

Belongs to the HPrK/P family. Homohexamer. Requires Mg(2+) as cofactor.

It catalyses the reaction [HPr protein]-L-serine + ATP = [HPr protein]-O-phospho-L-serine + ADP + H(+). It carries out the reaction [HPr protein]-O-phospho-L-serine + phosphate + H(+) = [HPr protein]-L-serine + diphosphate. Its function is as follows. Catalyzes the ATP- as well as the pyrophosphate-dependent phosphorylation of a specific serine residue in HPr, a phosphocarrier protein of the phosphoenolpyruvate-dependent sugar phosphotransferase system (PTS). HprK/P also catalyzes the pyrophosphate-producing, inorganic phosphate-dependent dephosphorylation (phosphorolysis) of seryl-phosphorylated HPr (P-Ser-HPr). The two antagonistic activities of HprK/P are regulated by several intracellular metabolites, which change their concentration in response to the absence or presence of rapidly metabolisable carbon sources (glucose, fructose, etc.) in the growth medium. Therefore, by controlling the phosphorylation state of HPr, HPrK/P is a sensor enzyme that plays a major role in the regulation of carbon metabolism and sugar transport: it mediates carbon catabolite repression (CCR), and regulates PTS-catalyzed carbohydrate uptake and inducer exclusion. This chain is HPr kinase/phosphorylase, found in Clostridium botulinum (strain Alaska E43 / Type E3).